The following is a 1159-amino-acid chain: WASH complex subunit 5 (1159 aa).

Serine 917 is modified (phosphoserine).

The protein belongs to the strumpellin family. As to quaternary structure, component of the WASH core complex also described as WASH regulatory complex (SHRC) composed of WASH (WASHC1, WASH2P or WASH3P), WASHC2 (WASHC2A or WASHC2C), WASHC3, WASHC4 and WASHC5. The WASH core complex associates via WASHC2 with the F-actin-capping protein dimer (formed by CAPZA1, CAPZA2 or CAPZA3 and CAPZB) in a transient or substoichiometric manner which was initially described as WASH complex. Interacts with VCP, PI4K2A.

The protein resides in the cytoplasm. It is found in the cytosol. It localises to the endoplasmic reticulum. The protein localises to the early endosome. Functionally, acts as a component of the WASH core complex that functions as a nucleation-promoting factor (NPF) at the surface of endosomes, where it recruits and activates the Arp2/3 complex to induce actin polymerization, playing a key role in the fission of tubules that serve as transport intermediates during endosome sorting. May be involved in axonal outgrowth. Involved in cellular localization of ADRB2. Involved in cellular trafficking of BLOC-1 complex cargos such as ATP7A and VAMP7. The chain is WASH complex subunit 5 from Pongo abelii (Sumatran orangutan).